A 306-amino-acid polypeptide reads, in one-letter code: tRNA pseudouridine synthase B (306 aa).

Asp-47 acts as the Nucleophile in catalysis.

Belongs to the pseudouridine synthase TruB family. Type 1 subfamily.

The enzyme catalyses uridine(55) in tRNA = pseudouridine(55) in tRNA. Its function is as follows. Responsible for synthesis of pseudouridine from uracil-55 in the psi GC loop of transfer RNAs. This is tRNA pseudouridine synthase B from Neisseria meningitidis serogroup A / serotype 4A (strain DSM 15465 / Z2491).